Consider the following 304-residue polypeptide: ATP phosphoribosyltransferase (304 aa).

It belongs to the ATP phosphoribosyltransferase family. Long subfamily. Mg(2+) serves as cofactor.

Its subcellular location is the cytoplasm. It carries out the reaction 1-(5-phospho-beta-D-ribosyl)-ATP + diphosphate = 5-phospho-alpha-D-ribose 1-diphosphate + ATP. Its pathway is amino-acid biosynthesis; L-histidine biosynthesis; L-histidine from 5-phospho-alpha-D-ribose 1-diphosphate: step 1/9. With respect to regulation, feedback inhibited by histidine. Catalyzes the condensation of ATP and 5-phosphoribose 1-diphosphate to form N'-(5'-phosphoribosyl)-ATP (PR-ATP). Has a crucial role in the pathway because the rate of histidine biosynthesis seems to be controlled primarily by regulation of HisG enzymatic activity. The protein is ATP phosphoribosyltransferase of Xanthomonas oryzae pv. oryzae (strain MAFF 311018).